The primary structure comprises 376 residues: MSGKSPAQTRVVVGMSGGVDSSVTALLLKEQGYDVIGVFMKNWDDTDENGVCTATEDYKDVAAVADQIGVPYYSVNFEKEYWDRVFEYFLAEYRAGRTPNPDVMCNKEIKFKAFLDYAMELGADYVATGHYAQVRTDENGIVHMLRGADNNKDQTYFLSQLTQEQLKKTMFPLGHLEKPEVRKIAEKAGLATAKKKDSTGICFIGEKNFKKFLGEYLPAQPGKMMTLDGIEMGNHAGLMYYTIGQRGGLGIGGQHGQLTSDPWFVVGKDLTTNTLYVGQGFHHEHLYSTSLDASDLSFTREMPETFDLHCTAKFRYRQEDTGVTIHVNGDKVTVDFDEPVRAITPGQAVVFYDGEECLGGAMIDVAYKAQKVMQYQ.

ATP contacts are provided by residues 14–21 (GMSGGVDS) and methionine 40. The interval 100–102 (NPD) is interaction with target base in tRNA. Cysteine 105 acts as the Nucleophile in catalysis. A disulfide bridge connects residues cysteine 105 and cysteine 202. Residue glycine 129 coordinates ATP. The interaction with tRNA stretch occupies residues 152–154 (KDQ). The active-site Cysteine persulfide intermediate is cysteine 202. Positions 315–316 (RY) are interaction with tRNA.

This sequence belongs to the MnmA/TRMU family.

The protein localises to the cytoplasm. The catalysed reaction is S-sulfanyl-L-cysteinyl-[protein] + uridine(34) in tRNA + AH2 + ATP = 2-thiouridine(34) in tRNA + L-cysteinyl-[protein] + A + AMP + diphosphate + H(+). In terms of biological role, catalyzes the 2-thiolation of uridine at the wobble position (U34) of tRNA, leading to the formation of s(2)U34. This Lactococcus lactis subsp. lactis (strain IL1403) (Streptococcus lactis) protein is tRNA-specific 2-thiouridylase MnmA.